Reading from the N-terminus, the 226-residue chain is Thymocyte nuclear protein 1 (226 aa).

Positions 1–38 (MPRPRKRQTGTAGPDRKKLSGKRTKTENSESTSVKLEN) are disordered. The Nuclear localization signal motif lies at 5 to 10 (RKRQTG). Residues 14-28 (PDRKKLSGKRTKTEN) are compositionally biased toward basic and acidic residues. Polar residues predominate over residues 29–38 (SESTSVKLEN).

Phosphorylated. In terms of tissue distribution, expressed in the medulla containing mature thymocytes, but not the cortex having immature thymocytes (at protein level). Abundant expression seen in testis, liver, brain and kidney with lower levels of the expression in thymus, spleen, heart and stomach.

It localises to the nucleus. Functionally, specifically binds 5-hydroxymethylcytosine (5hmC), suggesting that it acts as a specific reader of 5hmC. The polypeptide is Thymocyte nuclear protein 1 (Thyn1) (Mus musculus (Mouse)).